The chain runs to 405 residues: Tryptophan synthase beta chain (405 aa).

K98 carries the N6-(pyridoxal phosphate)lysine modification.

It belongs to the TrpB family. Tetramer of two alpha and two beta chains. Requires pyridoxal 5'-phosphate as cofactor.

It catalyses the reaction (1S,2R)-1-C-(indol-3-yl)glycerol 3-phosphate + L-serine = D-glyceraldehyde 3-phosphate + L-tryptophan + H2O. It participates in amino-acid biosynthesis; L-tryptophan biosynthesis; L-tryptophan from chorismate: step 5/5. Its function is as follows. The beta subunit is responsible for the synthesis of L-tryptophan from indole and L-serine. The protein is Tryptophan synthase beta chain of Xanthomonas oryzae pv. oryzae (strain MAFF 311018).